Here is a 135-residue protein sequence, read N- to C-terminus: DNA-directed RNA polymerase subunit omega (135 aa).

This sequence belongs to the RNA polymerase subunit omega family. The RNAP catalytic core consists of 2 alpha, 1 beta, 1 beta' and 1 omega subunit. When a sigma factor is associated with the core the holoenzyme is formed, which can initiate transcription.

The enzyme catalyses RNA(n) + a ribonucleoside 5'-triphosphate = RNA(n+1) + diphosphate. In terms of biological role, promotes RNA polymerase assembly. Latches the N- and C-terminal regions of the beta' subunit thereby facilitating its interaction with the beta and alpha subunits. The sequence is that of DNA-directed RNA polymerase subunit omega from Rhizobium meliloti (strain 1021) (Ensifer meliloti).